The sequence spans 522 residues: Maturase K (522 aa).

Belongs to the intron maturase 2 family. MatK subfamily.

The protein resides in the plastid. It is found in the chloroplast. Its function is as follows. Usually encoded in the trnK tRNA gene intron. Probably assists in splicing its own and other chloroplast group II introns. The chain is Maturase K from Pillansia templemannii.